We begin with the raw amino-acid sequence, 340 residues long: Uroporphyrinogen decarboxylase (340 aa).

Substrate contacts are provided by residues 21–25 (RQAGR), Phe40, Asp71, Tyr146, Ser201, and His316.

This sequence belongs to the uroporphyrinogen decarboxylase family. Homodimer.

It is found in the cytoplasm. The catalysed reaction is uroporphyrinogen III + 4 H(+) = coproporphyrinogen III + 4 CO2. It functions in the pathway porphyrin-containing compound metabolism; protoporphyrin-IX biosynthesis; coproporphyrinogen-III from 5-aminolevulinate: step 4/4. In terms of biological role, catalyzes the decarboxylation of four acetate groups of uroporphyrinogen-III to yield coproporphyrinogen-III. This is Uroporphyrinogen decarboxylase from Rickettsia bellii (strain RML369-C).